The sequence spans 242 residues: Derlin-1 (242 aa).

Residues 1–20 are Cytoplasmic-facing; it reads MSSPAEYYNSLPPISKAYGT. The helical transmembrane segment at 21–41 threads the bilayer; that stretch reads LCFFATVLCQLQILNPPFLAL. Residues 42 to 55 are Lumenal-facing; the sequence is YYPFVFKKFQIWRL. Residues 56 to 76 form a helical membrane-spanning segment; that stretch reads FTSFFFLGKFSINFGIRLLMI. Residues 77–94 are Cytoplasmic-facing; that stretch reads ARYGVQLEKGAFEKRTAD. A helical membrane pass occupies residues 95–115; that stretch reads FLWMMIFGAISLLALSAIPFL. Residues 116–157 lie on the Lumenal side of the membrane; that stretch reads DIYFLGVPMVSMLLYVWSREYPNSQISMYGLVQLRSFYLPWA. The chain crosses the membrane as a helical span at residues 158–178; the sequence is MLGLDVIFGSEILPGLLGILV. The Cytoplasmic portion of the chain corresponds to 179 to 242; the sequence is GHTYYFLSVL…FRGRSYRLSQ (64 aa).

The protein belongs to the derlin family. Seedling shoots and roots.

Its subcellular location is the endoplasmic reticulum membrane. Functionally, may be involved in the degradation process of specific misfolded endoplasmic reticulum (ER) luminal proteins. This chain is Derlin-1 (DER1), found in Oryza sativa subsp. japonica (Rice).